A 272-amino-acid chain; its full sequence is Putative hydro-lyase AZC_4080 (272 aa).

The protein belongs to the D-glutamate cyclase family.

This Azorhizobium caulinodans (strain ATCC 43989 / DSM 5975 / JCM 20966 / LMG 6465 / NBRC 14845 / NCIMB 13405 / ORS 571) protein is Putative hydro-lyase AZC_4080.